Here is a 151-residue protein sequence, read N- to C-terminus: D-aminoacyl-tRNA deacylase (151 aa).

The Gly-cisPro motif, important for rejection of L-amino acids motif lies at 142–143; it reads GP.

This sequence belongs to the DTD family. In terms of assembly, homodimer.

It is found in the cytoplasm. The enzyme catalyses glycyl-tRNA(Ala) + H2O = tRNA(Ala) + glycine + H(+). It carries out the reaction a D-aminoacyl-tRNA + H2O = a tRNA + a D-alpha-amino acid + H(+). In terms of biological role, an aminoacyl-tRNA editing enzyme that deacylates mischarged D-aminoacyl-tRNAs. Also deacylates mischarged glycyl-tRNA(Ala), protecting cells against glycine mischarging by AlaRS. Acts via tRNA-based rather than protein-based catalysis; rejects L-amino acids rather than detecting D-amino acids in the active site. By recycling D-aminoacyl-tRNA to D-amino acids and free tRNA molecules, this enzyme counteracts the toxicity associated with the formation of D-aminoacyl-tRNA entities in vivo and helps enforce protein L-homochirality. The sequence is that of D-aminoacyl-tRNA deacylase from Psychrobacter arcticus (strain DSM 17307 / VKM B-2377 / 273-4).